A 71-amino-acid chain; its full sequence is DNA-directed RNA polymerase subunit omega (71 aa).

The protein belongs to the RNA polymerase subunit omega family. The RNAP catalytic core consists of 2 alpha, 1 beta, 1 beta' and 1 omega subunit. When a sigma factor is associated with the core the holoenzyme is formed, which can initiate transcription.

It carries out the reaction RNA(n) + a ribonucleoside 5'-triphosphate = RNA(n+1) + diphosphate. Functionally, promotes RNA polymerase assembly. Latches the N- and C-terminal regions of the beta' subunit thereby facilitating its interaction with the beta and alpha subunits. The polypeptide is DNA-directed RNA polymerase subunit omega (Syntrophomonas wolfei subsp. wolfei (strain DSM 2245B / Goettingen)).